A 545-amino-acid polypeptide reads, in one-letter code: CTP synthase (545 aa).

Residues 1-266 (MTTNYIFVTG…DDYICKRFSL (266 aa)) are amidoligase domain. S14 is a CTP binding site. S14 contributes to the UTP binding site. ATP-binding positions include 15–20 (SLGKGI) and D72. 2 residues coordinate Mg(2+): D72 and E140. Residues 147-149 (DIE), 187-192 (KTKPTQ), and K223 each bind CTP. UTP contacts are provided by residues 187 to 192 (KTKPTQ) and K223. Residue 239 to 241 (KDV) coordinates ATP. The Glutamine amidotransferase type-1 domain occupies 291–542 (TIGMVGKYIE…VKAASEYQKR (252 aa)). L-glutamine is bound at residue G352. C379 functions as the Nucleophile; for glutamine hydrolysis in the catalytic mechanism. L-glutamine-binding positions include 380–383 (LGMQ), E403, and R470. Catalysis depends on residues H515 and E517.

The protein belongs to the CTP synthase family. Homotetramer.

It catalyses the reaction UTP + L-glutamine + ATP + H2O = CTP + L-glutamate + ADP + phosphate + 2 H(+). The enzyme catalyses L-glutamine + H2O = L-glutamate + NH4(+). It carries out the reaction UTP + NH4(+) + ATP = CTP + ADP + phosphate + 2 H(+). The protein operates within pyrimidine metabolism; CTP biosynthesis via de novo pathway; CTP from UDP: step 2/2. Its activity is regulated as follows. Allosterically activated by GTP, when glutamine is the substrate; GTP has no effect on the reaction when ammonia is the substrate. The allosteric effector GTP functions by stabilizing the protein conformation that binds the tetrahedral intermediate(s) formed during glutamine hydrolysis. Inhibited by the product CTP, via allosteric rather than competitive inhibition. Catalyzes the ATP-dependent amination of UTP to CTP with either L-glutamine or ammonia as the source of nitrogen. Regulates intracellular CTP levels through interactions with the four ribonucleotide triphosphates. The chain is CTP synthase from Citrobacter koseri (strain ATCC BAA-895 / CDC 4225-83 / SGSC4696).